A 200-amino-acid chain; its full sequence is 3-isopropylmalate dehydratase small subunit (200 aa).

It belongs to the LeuD family. LeuD type 1 subfamily. Heterodimer of LeuC and LeuD.

It catalyses the reaction (2R,3S)-3-isopropylmalate = (2S)-2-isopropylmalate. Its pathway is amino-acid biosynthesis; L-leucine biosynthesis; L-leucine from 3-methyl-2-oxobutanoate: step 2/4. In terms of biological role, catalyzes the isomerization between 2-isopropylmalate and 3-isopropylmalate, via the formation of 2-isopropylmaleate. The sequence is that of 3-isopropylmalate dehydratase small subunit from Vibrio vulnificus (strain CMCP6).